A 102-amino-acid chain; its full sequence is Small ribosomal subunit protein uS10 (102 aa).

It belongs to the universal ribosomal protein uS10 family. Part of the 30S ribosomal subunit.

Involved in the binding of tRNA to the ribosomes. The sequence is that of Small ribosomal subunit protein uS10 from Roseiflexus sp. (strain RS-1).